The chain runs to 126 residues: MAFDKDAFLTALDSMTVLELNDLVKAIEEKFGVSAAAMAAPAAGGAAGGGAAAAEEKTEFNVVLADAGANKVAVIKAVREITGLGLKEAKDLVDGAPKNVKEGIAKADAEAAVKKLVEAGAKAELK.

It belongs to the bacterial ribosomal protein bL12 family. Homodimer. Part of the ribosomal stalk of the 50S ribosomal subunit. Forms a multimeric L10(L12)X complex, where L10 forms an elongated spine to which 2 to 4 L12 dimers bind in a sequential fashion. Binds GTP-bound translation factors.

Its function is as follows. Forms part of the ribosomal stalk which helps the ribosome interact with GTP-bound translation factors. Is thus essential for accurate translation. This Acidovorax ebreus (strain TPSY) (Diaphorobacter sp. (strain TPSY)) protein is Large ribosomal subunit protein bL12.